A 563-amino-acid chain; its full sequence is Efflux pump notK (563 aa).

The interval 1 to 32 is disordered; that stretch reads MTKDEDSGTTDGGYSTPDIAVQEKQDQPPAPE. The next 14 helical transmembrane spans lie at 48–68, 78–98, 108–128, 138–158, 165–185, 197–217, 239–259, 270–290, 312–332, 345–365, 374–394, 406–426, 438–458, and 509–529; these read IFLS…AIPG, DVGW…PMWG, LVYL…AAAP, ALQG…ISYV, AMLI…GPLL, WCFW…VLFF, LPGF…LQWG, VIAT…VEWI, LYGW…PIYF, VNSL…GFLI, YEFA…TLDI, VIFG…LESF, VMLM…QSIF, and VFAF…AIPF. Residues 538–563 are disordered; sequence GPSNGQEEEEGKKDGPAEKKEDEVAV. Residues 547–563 are compositionally biased toward basic and acidic residues; sequence EGKKDGPAEKKEDEVAV.

It belongs to the major facilitator superfamily. TCR/Tet family.

The protein localises to the cell membrane. Efflux pump; part of the gene cluster that mediates the biosynthesis of notoamide, a fungal indole alkaloid that belongs to a family of natural products containing a characteristic bicyclo[2.2.2]diazaoctane core. This chain is Efflux pump notK, found in Aspergillus sp. (strain MF297-2).